Reading from the N-terminus, the 337-residue chain is Glyceraldehyde-3-phosphate dehydrogenase, cytosolic (337 aa).

Residues 1–151 are binding to NAD; sequence MAKVKVGING…YKSDLNIVSN (151 aa). Residues 13–14, D35, and R82 each bind NAD(+); that span reads RI. The interval 152–337 is catalytic; that stretch reads ASCTTNCLAP…DLIMHISKCQ (186 aa). D-glyceraldehyde 3-phosphate is bound by residues 153 to 155, T184, 213 to 214, and R236; these read SCT and TG. C154 serves as the catalytic Nucleophile. N318 is a binding site for NAD(+).

This sequence belongs to the glyceraldehyde-3-phosphate dehydrogenase family. Homotetramer.

It localises to the cytoplasm. It catalyses the reaction D-glyceraldehyde 3-phosphate + phosphate + NAD(+) = (2R)-3-phospho-glyceroyl phosphate + NADH + H(+). It participates in carbohydrate degradation; glycolysis; pyruvate from D-glyceraldehyde 3-phosphate: step 1/5. Key enzyme in glycolysis that catalyzes the first step of the pathway by converting D-glyceraldehyde 3-phosphate (G3P) into 3-phospho-D-glyceroyl phosphate. Essential for the maintenance of cellular ATP levels and carbohydrate metabolism. The chain is Glyceraldehyde-3-phosphate dehydrogenase, cytosolic (GAPC) from Mesembryanthemum crystallinum (Common ice plant).